Consider the following 2465-residue polypeptide: Serine/threonine-protein kinase TOR (2465 aa).

HEAT repeat units follow at residues 184-221 (VHVP…VIEK), 271-308 (SRYR…FLRD), 348-389 (AELV…AMGP), 549-587 (RLVE…FDDF), 588-625 (LAQA…KNPA), 717-755 (QYLP…STGY), 761-799 (NEYP…LDPH), 888-926 (PYLP…IVRQ), 981-1018 (MYIL…VFGG), 1022-1059 (EHMH…TVQV), and 1061-1098 (THVS…ALGE). Residues 1158–1191 (DFGGVPSEEADETQRQPRSHQVNDVRLRSAGEAS) form a disordered region. Residues 1297–1877 (LLGALAEKCR…MYPLLVACKS (581 aa)) form the FAT domain. Residues 2051–2369 (FVPQLIVITS…PPRGAREREL (319 aa)) enclose the PI3K/PI4K catalytic domain. Residues 2057–2063 (VITSKQR) form a G-loop region. Positions 2230 to 2238 (GLGDRHPSN) are catalytic loop. Positions 2250-2275 (HIDFGDCFEASMNREKFPEKVPFRLT) are activation loop. The segment at 2401-2431 (RDFSSGSSLSGAGSSTQHGNEHLASGDTREV) is disordered. Low complexity predominate over residues 2404 to 2415 (SSGSSLSGAGSS). The FATC domain occupies 2433–2465 (PGLSVKVQVQRLILQATSHENLCQNYVGWCPFW).

This sequence belongs to the PI3/PI4-kinase family. In terms of assembly, the target of rapamycin complex 1 (TORC1) is composed of at least RAPTOR, LST8 and TOR.

The catalysed reaction is L-seryl-[protein] + ATP = O-phospho-L-seryl-[protein] + ADP + H(+). It carries out the reaction L-threonyl-[protein] + ATP = O-phospho-L-threonyl-[protein] + ADP + H(+). With respect to regulation, insensitive to inhibition by rapamycin. Its function is as follows. Component of TORC1 complex, which is an essential cell growth regulator that controls plant development. Acts through the phosphorylation of downstream effectors that are recruited by the binding partner RAPTOR. Acts by activating transcription, protein synthesis and ribosome biogenesis, and inhibiting mRNA degradation and autophagy. In Oryza sativa subsp. japonica (Rice), this protein is Serine/threonine-protein kinase TOR.